The sequence spans 328 residues: DNA-directed RNA polymerase subunit alpha (328 aa).

Positions 1 to 231 are alpha N-terminal domain (alpha-NTD); that stretch reads MIYQMQMPAK…EHVTFFANFS (231 aa). Residues 247–328 form an alpha C-terminal domain (alpha-CTD) region; the sequence is DEFETMRRLL…MDITRYQMKG (82 aa).

This sequence belongs to the RNA polymerase alpha chain family. Homodimer. The RNAP catalytic core consists of 2 alpha, 1 beta, 1 beta' and 1 omega subunit. When a sigma factor is associated with the core the holoenzyme is formed, which can initiate transcription.

It catalyses the reaction RNA(n) + a ribonucleoside 5'-triphosphate = RNA(n+1) + diphosphate. DNA-dependent RNA polymerase catalyzes the transcription of DNA into RNA using the four ribonucleoside triphosphates as substrates. The chain is DNA-directed RNA polymerase subunit alpha from Chlorobium luteolum (strain DSM 273 / BCRC 81028 / 2530) (Pelodictyon luteolum).